A 506-amino-acid polypeptide reads, in one-letter code: Maturase K (506 aa).

Belongs to the intron maturase 2 family. MatK subfamily.

Its subcellular location is the plastid. It localises to the chloroplast. In terms of biological role, usually encoded in the trnK tRNA gene intron. Probably assists in splicing its own and other chloroplast group II introns. This is Maturase K from Melilotus albus (White sweet clover).